The chain runs to 214 residues: Adenylate kinase (214 aa).

10 to 15 (GAGKGT) provides a ligand contact to ATP. Residues 30–59 (STGDMLRAAVKAGTPLGVKAQEIMIQGGLV) are NMP. Residues T31, R36, 57–59 (GLV), 85–88 (GFPR), and Q92 each bind AMP. Residues 126-163 (GRRSCSSCGKGYHLVFDPPLRAGVCDVCGSGLVQRADD) are LID. R127 serves as a coordination point for ATP. 4 residues coordinate Zn(2+): C130, C133, C150, and C153. AMP-binding residues include R160 and R171. Position 199 (G199) interacts with ATP.

Belongs to the adenylate kinase family. In terms of assembly, monomer.

Its subcellular location is the cytoplasm. The catalysed reaction is AMP + ATP = 2 ADP. The protein operates within purine metabolism; AMP biosynthesis via salvage pathway; AMP from ADP: step 1/1. Its function is as follows. Catalyzes the reversible transfer of the terminal phosphate group between ATP and AMP. Plays an important role in cellular energy homeostasis and in adenine nucleotide metabolism. This chain is Adenylate kinase, found in Trichlorobacter lovleyi (strain ATCC BAA-1151 / DSM 17278 / SZ) (Geobacter lovleyi).